The following is a 189-amino-acid chain: UPF0301 protein CAB604 (189 aa).

This sequence belongs to the UPF0301 (AlgH) family.

This is UPF0301 protein CAB604 from Chlamydia abortus (strain DSM 27085 / S26/3) (Chlamydophila abortus).